The sequence spans 375 residues: Aminomethyltransferase (375 aa).

This sequence belongs to the GcvT family. In terms of assembly, the glycine cleavage system is composed of four proteins: P, T, L and H.

It carries out the reaction N(6)-[(R)-S(8)-aminomethyldihydrolipoyl]-L-lysyl-[protein] + (6S)-5,6,7,8-tetrahydrofolate = N(6)-[(R)-dihydrolipoyl]-L-lysyl-[protein] + (6R)-5,10-methylene-5,6,7,8-tetrahydrofolate + NH4(+). Its function is as follows. The glycine cleavage system catalyzes the degradation of glycine. The sequence is that of Aminomethyltransferase from Cupriavidus pinatubonensis (strain JMP 134 / LMG 1197) (Cupriavidus necator (strain JMP 134)).